A 699-amino-acid polypeptide reads, in one-letter code: D-(-)-3-hydroxybutyrate oligomer hydrolase (699 aa).

An N-terminal signal peptide occupies residues 1 to 33; the sequence is MTAIRGGSRRAPGLALALLGGVLLGACHGDENA. Ser-311 functions as the Charge relay system in the catalytic mechanism.

The protein belongs to the D-(-)-3-hydroxybutyrate oligomer hydrolase family.

Its subcellular location is the secreted. The catalysed reaction is (3R)-hydroxybutanoate dimer + H2O = 2 (R)-3-hydroxybutanoate + H(+). It functions in the pathway lipid metabolism; butanoate metabolism. Participates in the degradation of poly-3-hydroxybutyrate (PHB). It works downstream of poly(3-hydroxybutyrate) depolymerase, hydrolyzing D(-)-3-hydroxybutyrate oligomers of various length (3HB-oligomers) into 3HB-monomers. This chain is D-(-)-3-hydroxybutyrate oligomer hydrolase, found in Burkholderia mallei (strain SAVP1).